The chain runs to 93 residues: uncharacterized protein (93 aa).

This is an uncharacterized protein from Schizosaccharomyces pombe (strain 972 / ATCC 24843) (Fission yeast).